Here is a 244-residue protein sequence, read N- to C-terminus: Small ribosomal subunit protein uS3 (244 aa).

The KH type-2 domain occupies 39–107 (VREMLRKKLA…PAHINVTEVR (69 aa)). Positions 213–244 (VGQEKQDDSPRNDRNDRGDRGDRPSRPAREAR) are disordered. Basic and acidic residues predominate over residues 216–244 (EKQDDSPRNDRNDRGDRGDRPSRPAREAR).

It belongs to the universal ribosomal protein uS3 family. In terms of assembly, part of the 30S ribosomal subunit. Forms a tight complex with proteins S10 and S14.

Its function is as follows. Binds the lower part of the 30S subunit head. Binds mRNA in the 70S ribosome, positioning it for translation. The polypeptide is Small ribosomal subunit protein uS3 (Xanthomonas campestris pv. campestris (strain 8004)).